The chain runs to 322 residues: Zinc finger C2HC domain-containing protein zchc-1A (322 aa).

C2HC/C3H-type zinc fingers lie at residues 9 to 38 (PTFP…LASL) and 119 to 148 (DYVQ…QATR). The Zn(2+) site is built by cysteine 13, cysteine 16, histidine 28, cysteine 32, cysteine 123, cysteine 126, histidine 138, and cysteine 142. Polar residues predominate over residues 150–159 (QGGNLKSSGG). Residues 150-322 (QGGNLKSSGG…SRNNSRSRIF (173 aa)) form a disordered region. Positions 174 to 220 (NEGKKQESSSRNGSAERKPTTRGRDGSLLRARRDDSNDITSRRKSLD) are enriched in basic and acidic residues. 2 stretches are compositionally biased toward polar residues: residues 221-238 (TRTS…TSLS) and 264-274 (LQQSSTPQQRL). Residues 276–295 (TPASTTTTASRSGSRTSSRA) show a composition bias toward low complexity. Positions 296–305 (CPRDDSRDSR) are enriched in basic and acidic residues. Low complexity predominate over residues 311-322 (NNSRNNSRSRIF).

The protein belongs to the ZC2HC1 family. It depends on Zn(2+) as a cofactor.

This Caenorhabditis elegans protein is Zinc finger C2HC domain-containing protein zchc-1A.